The primary structure comprises 360 residues: Putative mRNA-decapping protein (360 aa).

The CCHC-type zinc-finger motif lies at 11-28; it reads HICSNCGRSGHEFRNCIE. Residues 163 to 347 form the Nudix hydrolase domain; sequence YKYDNILYHF…KKRILTRVYL (185 aa). The Nudix box signature appears at 242–264; the sequence is GRRDKRSEENMVCACREFEEETG. Residue glutamate 249 participates in Mg(2+) binding. Residue glutamate 258 is the Nucleophile of the active site. Position 262 (glutamate 262) interacts with Mg(2+).

The protein belongs to the Nudix hydrolase family. DIPP subfamily. Mg(2+) is required as a cofactor. The cofactor is Mn(2+).

The catalysed reaction is diphospho-myo-inositol polyphosphate + H2O = myo-inositol polyphosphate + phosphate.. Functionally, might function as a decapping enzyme required for the removal of the 5'-end m7GpppN cap tethered to viral and host mRNAs to allow their decay in cells. In addition to the mRNA cap, probably also efficiently hydrolyzes diphosphoinositol polyphosphates. This chain is Putative mRNA-decapping protein, found in Acanthamoeba polyphaga (Amoeba).